We begin with the raw amino-acid sequence, 471 residues long: Delta(24(24(1)))-sterol reductase erg4A (471 aa).

N-linked (GlcNAc...) asparagine glycosylation is present at N15. Helical transmembrane passes span 33–53, 89–109, 130–150, 159–179, 216–236, 244–264, 282–302, and 313–333; these read VTLI…GAVL, WTIY…LPGV, AVSS…TGVL, FGPL…VAYI, MFFE…GTAL, LVAG…NACA, GFML…HCTL, and HWNP…YWVW. NADP(+) is bound by residues K340, R344, L380, and 392–393; that span reads HY. Residues 397 to 417 form a helical membrane-spanning segment; it reads VFFAISWGLITGFNSPFPWFY. NADP(+)-binding positions include D432, 436–440, and Y447; that span reads CRERY.

It belongs to the ERG4/ERG24 family.

The protein localises to the endoplasmic reticulum membrane. It catalyses the reaction ergosterol + NADP(+) = ergosta-5,7,22,24(28)-tetraen-3beta-ol + NADPH + H(+). Its pathway is steroid metabolism; ergosterol biosynthesis. Delta(24(24(1)))-sterol reductase; part of the third module of ergosterol biosynthesis pathway that includes the late steps of the pathway. Catalyzes the last step of ergosterol biosynthesis by converting ergosta-5,7,22,24(28)-tetraen-3beta-ol into ergosterol. The third module or late pathway involves the ergosterol synthesis itself through consecutive reactions that mainly occur in the endoplasmic reticulum (ER) membrane. Firstly, the squalene synthase erg9 catalyzes the condensation of 2 farnesyl pyrophosphate moieties to form squalene, which is the precursor of all steroids. Squalene synthase is crucial for balancing the incorporation of farnesyl diphosphate (FPP) into sterol and nonsterol isoprene synthesis. Secondly, squalene is converted into lanosterol by the consecutive action of the squalene epoxidase erg1 and the lanosterol synthase erg7. Then, the delta(24)-sterol C-methyltransferase erg6 methylates lanosterol at C-24 to produce eburicol. Eburicol is the substrate of the sterol 14-alpha demethylase encoded by cyp51A and cyp51B, to yield 4,4,24-trimethyl ergosta-8,14,24(28)-trienol. The C-14 reductase erg24 then reduces the C14=C15 double bond which leads to 4,4-dimethylfecosterol. A sequence of further demethylations at C-4, involving the C-4 demethylation complex containing the C-4 methylsterol oxidases erg25A or erg25B, the sterol-4-alpha-carboxylate 3-dehydrogenase erg26 and the 3-keto-steroid reductase erg27, leads to the production of fecosterol via 4-methylfecosterol. The C-8 sterol isomerase erg2 then catalyzes the reaction which results in unsaturation at C-7 in the B ring of sterols and thus converts fecosterol to episterol. The sterol-C5-desaturase erg3B then catalyzes the introduction of a C-5 double bond in the B ring to produce 5-dehydroepisterol. The 2 other sterol-C5-desaturases, erg3A and erg3C, seem to be less important in ergosterol biosynthesis. The C-22 sterol desaturase erg5 further converts 5-dehydroepisterol into ergosta-5,7,22,24(28)-tetraen-3beta-ol by forming the C-22(23) double bond in the sterol side chain. Finally, ergosta-5,7,22,24(28)-tetraen-3beta-ol is substrate of the C-24(28) sterol reductases erg4A and erg4B to produce ergosterol. Possible alternative sterol biosynthetic pathways might exist from fecosterol to ergosterol, depending on the activities of the erg3 isoforms. The polypeptide is Delta(24(24(1)))-sterol reductase erg4A (Aspergillus fumigatus (strain ATCC MYA-4609 / CBS 101355 / FGSC A1100 / Af293) (Neosartorya fumigata)).